We begin with the raw amino-acid sequence, 346 residues long: Oxidoreductase calI (346 aa).

The interval V11–P33 is disordered. The span at G18 to D32 shows a compositional bias: basic and acidic residues. L52, K76, D100, and N128 together coordinate NADP(+). S181 (proton donor) is an active-site residue. NADP(+)-binding residues include Y208, K212, and I241. The active-site Proton acceptor is the Y208. K212 serves as the catalytic Lowers pKa of active site Tyr.

This sequence belongs to the short-chain dehydrogenases/reductases (SDR) family.

Its pathway is secondary metabolite biosynthesis. Its function is as follows. Oxidoreductase; part of the gene cluster that mediates the biosynthesis of calbistrin A and related compounds. Calbistrin A is a secondary metabolite with an interesting structure that was recently found to have bioactivity against leukemia cells. It consists of two polyketides linked by an ester bond: a bicyclic decalin containing polyketide and a linear 12 carbon dioic acid structure. The polyketide synthase calA is probably responsible for forming the decalin moiety. Because calA lacks a designated enoylreductase (ER) domain, the required activity is provided by the trans-enoyl reductase calK. Following release from the PKS, calF then probably catalyzes the oxidation and the subsequent Diels Alder cycloisomerization that lead to the formation of the decalin moiety. The decalin polyketide backbone includes two C-methyl groups, at C7 and C11 in backbone, of which the C7 position is probably methylated by the methyltransferase domain of calA. A candidate for adding the methyl group at C11, if not done by CalA, is the cluster methyltransferase calH. Several additional tailoring enzymes within the cluster could be involved in the modification of the decalin polyketide product. Those include the 3 cytochrome P450 monooxygenases CalE, CalG and CalL, of which one might be responsible for the introduction of the extra hydroxyl group attached to the backbone of the decalin moiety, at position C9 in the backbone, that allows for attachment of the linear moiety. One tailoring enzyme activity that is expected to be involved in biosynthesis of calbistrin is an acyltransferase for connecting the two polyketide synthase products, and which could be performed by the cluster acyltransferase calJ. The enzyme responsible for the biosynthesis of the linear moiety, probably a second PKS, has not been identified yet. The protein is Oxidoreductase calI of Penicillium decumbens.